Consider the following 654-residue polypeptide: MERSGPSEVTGSDASGPDPQLAVTMGFTGFGKKARTFDLEAMFEQTRRTAVERSRKTLEAREKEEEMNREKELRRQNEDIEPTSSRSNVVRDCSKSSSRDTSSSESEQSSDSSDDELIGPPLPPKMVGKPVNFMEEDILGPLPPPLNEEEEEAEEEEEEEEEEENPVHKIPDSHEITLKHGTKTVSALGLDPSGARLVTGGYDYDVKFWDFAGMDASFKAFRSLQPCECHQIKSLQYSNTGDMILVVSGSSQAKVIDRDGFEVMECIKGDQYIVDMANTKGHTAMLHTGSWHPKIKGEFMTCSNDATVRTWEVENPKKQKSVFKPRTMQGKKVIPTTCTYSRDGNLIAAACQNGSIQIWDRNLTVHPKFHYKQAHDSGTDTSCVTFSYDGNVLASRGGDDSLKLWDIRQFNKPLFSASGLPTMFPMTDCCFSPDDKLIVTGTSIQRGCGSGKLVFFERRTFQRVYEIDITDASVVRCLWHPKLNQIMVGTGNGLAKVYYDPNKSQRGAKLCVVKTQRKAKQAETLTQDYIITPHALPMFREPRQRSTRKQLEKDRLDPLKSHKPEPPVAGPGRGGRVGTHGGTLSSYIVKNIALDKTDDSNPREAILRHAKAAEDSPYWVSPAYSKTQPKTMFAQVESDDEEAKNEPEWKKRKI.

2 disordered regions span residues methionine 1 to glycine 26 and phenylalanine 43 to glutamate 175. The span at glutamine 45 to glutamate 78 shows a compositional bias: basic and acidic residues. Residues arginine 99–aspartate 111 show a composition bias toward low complexity. Positions asparagine 147–glutamate 164 are enriched in acidic residues. Over residues asparagine 165–glutamate 175 the composition is skewed to basic and acidic residues. WD repeat units lie at residues histidine 180–lysine 219, cysteine 227–lysine 268, glycine 281–serine 321, glycine 330–phenylalanine 369, aspartate 376–phenylalanine 415, proline 421–glutamate 466, and isoleucine 469–alanine 508. A Glycyl lysine isopeptide (Lys-Gly) (interchain with G-Cter in SUMO2) cross-link involves residue lysine 296. Lysine 452 carries the N6-acetyllysine modification. Over residues arginine 540 to glutamate 565 the composition is skewed to basic and acidic residues. The interval arginine 540–threonine 579 is disordered. Threonine 579 is modified (phosphothreonine). Residues lysine 590 and lysine 596 each participate in a glycyl lysine isopeptide (Lys-Gly) (interchain with G-Cter in SUMO2) cross-link. Serine 621 and serine 638 each carry phosphoserine. Residues lysine 630–isoleucine 654 are disordered. The segment covering lysine 644–isoleucine 654 has biased composition (basic and acidic residues).

The protein belongs to the WD repeat GAD-1 family.

The polypeptide is WD repeat-containing protein 70 (WDR70) (Homo sapiens (Human)).